Consider the following 307-residue polypeptide: UDP-N-acetylenolpyruvoylglucosamine reductase (307 aa).

An FAD-binding PCMH-type domain is found at Arg29–Gly197. The active site involves Arg176. Ser227 acts as the Proton donor in catalysis. The active site involves Glu297.

This sequence belongs to the MurB family. It depends on FAD as a cofactor.

The protein localises to the cytoplasm. The catalysed reaction is UDP-N-acetyl-alpha-D-muramate + NADP(+) = UDP-N-acetyl-3-O-(1-carboxyvinyl)-alpha-D-glucosamine + NADPH + H(+). The protein operates within cell wall biogenesis; peptidoglycan biosynthesis. Its function is as follows. Cell wall formation. This is UDP-N-acetylenolpyruvoylglucosamine reductase from Prochlorococcus marinus (strain MIT 9313).